Here is a 56-residue protein sequence, read N- to C-terminus: Large ribosomal subunit protein bL33 (56 aa).

Belongs to the bacterial ribosomal protein bL33 family.

The chain is Large ribosomal subunit protein bL33 from Vibrio campbellii (strain ATCC BAA-1116).